The primary structure comprises 304 residues: Secreted mono- and diacylglycerol lipase LIP1 (304 aa).

Residues 1–19 (MLFSRFVLLAFGSVAAVSA) form the signal peptide. O-linked (Man...) threonine glycosylation is present at Thr32. The cysteines at positions 57 and 297 are disulfide-linked. Residue Ser171 is the Nucleophile of the active site. Asp228 is a catalytic residue. The N-linked (GlcNAc...) asparagine glycan is linked to Asn253. Residue His281 is part of the active site.

This sequence belongs to the AB hydrolase superfamily. Lipase family. Class 3 subfamily.

The protein localises to the secreted. The protein resides in the cell wall. It carries out the reaction a monoacylglycerol + H2O = glycerol + a fatty acid + H(+). The catalysed reaction is a diacylglycerol + H2O = a monoacylglycerol + a fatty acid + H(+). RHC 80267, a well-known inhibitor of diacylglycerol lipases from mammals, also acts as an inhibitor for LIP1/SMG1. Functionally, secreted lipase involved in Dandruff and seborrheic dermatitis (D/SD) probably via lipase-mediated breakdown of sebaceous lipids and release of irritating free fatty acids. Shows activity against monoglyceride and diglyceride substrates, but not triglyceride substrates and does not exhibit regio-selective production of diacylglycerols. Able to hydrolyze diacylglycerols such as distearin, dilinolein, dipalmitoylglycerol and dipalmitolein. Cleaves oleic acid from 1,2 isomers of diolein on both the 1 and the 2 position of the glycerol backbone, resulting mainly in free fatty acids but no monoolein is detected. Shows activity on monoolein and liberates mostly free fatty acids, but can also perform the reverse reaction and produce diolein. This chain is Secreted mono- and diacylglycerol lipase LIP1, found in Malassezia globosa (strain ATCC MYA-4612 / CBS 7966) (Dandruff-associated fungus).